We begin with the raw amino-acid sequence, 132 residues long: Fatty acid-binding protein, intestinal (132 aa).

A2 bears the N-acetylalanine mark. Hexadecanoate is bound by residues W83 and R107. Positions 83 and 107 each coordinate tetradecanoate.

This sequence belongs to the calycin superfamily. Fatty-acid binding protein (FABP) family. Expressed in the small intestine. Highest expression levels in the proximal ileum.

Its subcellular location is the cytoplasm. Its function is as follows. FABPs are thought to play a role in the intracellular transport of long-chain fatty acids and their acyl-CoA esters. FABP2 is probably involved in triglyceride-rich lipoprotein synthesis. Binds saturated long-chain fatty acids with a high affinity, but binds with a lower affinity to unsaturated long-chain fatty acids. FABP2 may also help maintain energy homeostasis by functioning as a lipid sensor. The chain is Fatty acid-binding protein, intestinal (Fabp2) from Mus musculus (Mouse).